A 239-amino-acid polypeptide reads, in one-letter code: Purine nucleoside phosphorylase DeoD-type 1 (239 aa).

Residue histidine 5 participates in a purine D-ribonucleoside binding. Phosphate contacts are provided by residues glycine 21, arginine 25, arginine 44, and 88-91 (RVGS). A purine D-ribonucleoside-binding positions include 180-182 (EME) and 204-205 (SD). Aspartate 205 (proton donor) is an active-site residue.

This sequence belongs to the PNP/UDP phosphorylase family. As to quaternary structure, homohexamer; trimer of homodimers.

The enzyme catalyses a purine D-ribonucleoside + phosphate = a purine nucleobase + alpha-D-ribose 1-phosphate. The catalysed reaction is a purine 2'-deoxy-D-ribonucleoside + phosphate = a purine nucleobase + 2-deoxy-alpha-D-ribose 1-phosphate. Its function is as follows. Catalyzes the reversible phosphorolytic breakdown of the N-glycosidic bond in the beta-(deoxy)ribonucleoside molecules, with the formation of the corresponding free purine bases and pentose-1-phosphate. The sequence is that of Purine nucleoside phosphorylase DeoD-type 1 from Vibrio parahaemolyticus serotype O3:K6 (strain RIMD 2210633).